Reading from the N-terminus, the 2212-residue chain is RNA-directed RNA polymerase L (2212 aa).

Positions 30–288 (KDALLSQVHP…SHEENDSLDC (259 aa)) are endonuclease. Mn(2+) contacts are provided by Glu55, Asp93, and Glu106. The active site involves Lys119. The tract at residues 922–942 (MKSSDAREERLQDPKRNEKNA) is disordered. Residues 923-942 (KSSDAREERLQDPKRNEKNA) are compositionally biased toward basic and acidic residues. Residues 1175-1371 (CDMKMAVNNG…YLSSKLNKFV (197 aa)) form the RdRp catalytic domain. A Mg(2+)-binding site is contributed by Asp1333.

This sequence belongs to the Bunyavirales RNA polymerase family. In terms of assembly, homomultimer; the oligomeric structure is essential for the polymerase activity. Interacts with nucleoprotein N. Interacts with protein Z; this interaction inhibits viral transcription and replication, Z partially blocks the product exit tunnel for the releasing nascent RNA product. The cofactor is Mn(2+). Mg(2+) is required as a cofactor.

It localises to the virion. The protein resides in the host cytoplasm. It catalyses the reaction RNA(n) + a ribonucleoside 5'-triphosphate = RNA(n+1) + diphosphate. In terms of biological role, RNA-dependent RNA polymerase, which is responsible for the replication and transcription of the viral RNA genome using antigenomic RNA as an intermediate. During transcription, synthesizes subgenomic RNAs and assures their capping by a cap-snatching mechanism, which involves the endonuclease activity cleaving the host capped pre-mRNAs. These short capped RNAs are then used as primers for viral transcription. The 3'-end of subgenomic mRNAs molecules are heterogeneous and not polyadenylated. The replicase function is to direct synthesis of antigenomic and genomic RNA which are encapsidated and non capped. As a consequence of the use of the same enzyme for both transcription and replication, these mechanisms need to be well coordinated. These processes may be regulated by proteins N and Z in a dose-dependent manner. Z protein inhibits the viral polymerase L und thus the viral transcription and RNA synthesis. The protein is RNA-directed RNA polymerase L of Sabia mammarenavirus (isolate Human/Brasil/SPH114202/1990) (SABV).